Reading from the N-terminus, the 256-residue chain is Chemotaxis protein methyltransferase (256 aa).

A CheR-type methyltransferase domain is found at 1-256 (MDTYSVFTTK…PADTFFYQKR (256 aa)). S-adenosyl-L-methionine-binding positions include N67, S69, R73, E107, D130, 185-186 (NL), and 201-202 (RN).

In terms of assembly, monomer.

It carries out the reaction L-glutamyl-[protein] + S-adenosyl-L-methionine = [protein]-L-glutamate 5-O-methyl ester + S-adenosyl-L-homocysteine. Its function is as follows. Methylation of the membrane-bound methyl-accepting chemotaxis proteins (MCP) to form gamma-glutamyl methyl ester residues in MCP. CheR is responsible for the chemotactic adaptation to repellents. This chain is Chemotaxis protein methyltransferase (cheR), found in Bacillus subtilis (strain 168).